The chain runs to 216 residues: Uracil phosphoribosyltransferase (216 aa).

K30–R34 is a binding site for GTP. Residues R80, R105, and D140–T148 contribute to the 5-phospho-alpha-D-ribose 1-diphosphate site. Uracil contacts are provided by residues I203 and G208–A210. Residue D209 coordinates 5-phospho-alpha-D-ribose 1-diphosphate.

This sequence belongs to the UPRTase family. Requires Mg(2+) as cofactor.

The enzyme catalyses UMP + diphosphate = 5-phospho-alpha-D-ribose 1-diphosphate + uracil. Its pathway is pyrimidine metabolism; UMP biosynthesis via salvage pathway; UMP from uracil: step 1/1. Allosterically activated by GTP. In terms of biological role, catalyzes the conversion of uracil and 5-phospho-alpha-D-ribose 1-diphosphate (PRPP) to UMP and diphosphate. The polypeptide is Uracil phosphoribosyltransferase (Sulfurisphaera tokodaii (strain DSM 16993 / JCM 10545 / NBRC 100140 / 7) (Sulfolobus tokodaii)).